Here is a 154-residue protein sequence, read N- to C-terminus: 3-hydroxyacyl-[acyl-carrier-protein] dehydratase FabZ (154 aa).

Residue His54 is part of the active site.

Belongs to the thioester dehydratase family. FabZ subfamily.

It is found in the cytoplasm. The enzyme catalyses a (3R)-hydroxyacyl-[ACP] = a (2E)-enoyl-[ACP] + H2O. Its function is as follows. Involved in unsaturated fatty acids biosynthesis. Catalyzes the dehydration of short chain beta-hydroxyacyl-ACPs and long chain saturated and unsaturated beta-hydroxyacyl-ACPs. This is 3-hydroxyacyl-[acyl-carrier-protein] dehydratase FabZ from Shewanella baltica (strain OS223).